Consider the following 107-residue polypeptide: U1-lycotoxin-Ls1l (107 aa).

An N-terminal signal peptide occupies residues 1-20; that stretch reads MMKVLVVVALLVTLISYSSS. Residues 21–41 constitute a propeptide that is removed on maturation; the sequence is EGIDDLEADELLSLMANEQTR. 4 cysteine pairs are disulfide-bonded: C44/C59, C51/C68, C58/C86, and C70/C84.

It belongs to the neurotoxin 19 (CSTX) family. 04 (U1-Lctx) subfamily. As to expression, expressed by the venom gland.

The protein resides in the secreted. The polypeptide is U1-lycotoxin-Ls1l (Lycosa singoriensis (Wolf spider)).